The sequence spans 387 residues: Succinate--CoA ligase [ADP-forming] subunit beta (387 aa).

The ATP-grasp domain occupies 9–236 (KELFAKHNVP…RAATDPLELK (228 aa)). ATP-binding positions include lysine 45, 52–54 (GRG), serine 94, and glutamate 99. Mg(2+) contacts are provided by asparagine 191 and aspartate 205. Residues asparagine 256 and 318 to 320 (GIT) each bind substrate.

This sequence belongs to the succinate/malate CoA ligase beta subunit family. As to quaternary structure, heterotetramer of two alpha and two beta subunits. The cofactor is Mg(2+).

The catalysed reaction is succinate + ATP + CoA = succinyl-CoA + ADP + phosphate. It carries out the reaction GTP + succinate + CoA = succinyl-CoA + GDP + phosphate. It participates in carbohydrate metabolism; tricarboxylic acid cycle; succinate from succinyl-CoA (ligase route): step 1/1. Its function is as follows. Succinyl-CoA synthetase functions in the citric acid cycle (TCA), coupling the hydrolysis of succinyl-CoA to the synthesis of either ATP or GTP and thus represents the only step of substrate-level phosphorylation in the TCA. The beta subunit provides nucleotide specificity of the enzyme and binds the substrate succinate, while the binding sites for coenzyme A and phosphate are found in the alpha subunit. This Mycobacterium marinum (strain ATCC BAA-535 / M) protein is Succinate--CoA ligase [ADP-forming] subunit beta.